The sequence spans 475 residues: E3 ubiquitin-protein ligase TRIM21 (475 aa).

Residues 16-55 (CPICLDPFVEPVSIECGHSFCQECISQVGKGGGSVCPVCR) form an RING-type zinc finger. Residues Cys-92, His-95, Cys-114, and His-120 each contribute to the Zn(2+) site. The B box-type zinc finger occupies 92 to 123 (CAVHGERLHLFCEKDGKALCWVCAQSRKHRDH). Residues 128–238 (LEEAAQEYQE…ISELDRRCHS (111 aa)) are a coiled coil. At Ser-266 the chain carries Phosphoserine. In terms of domain architecture, B30.2/SPRY spans 268-465 (ELRSVCHVPG…NTAPLTLCPL (198 aa)).

Belongs to the TRIM/RBCC family. As to quaternary structure, homotrimer. Interacts (via C-terminus) with IRF8 (via C-terminus). Component of a SCF(SKP2)-like complex containing CUL1, SKP1, TRIM21 and SKP2. Interacts with CALR, CUL1, FBXW11, HSPA5, IKBKB, IRF3, SKP1 and VCP. Interacts with SKP2; the interaction with SKP2 does not depend on an intact F-box domain. Interacts (via N-terminus and C-terminus) with DCP2 (via N-terminus and C-terminus). Interacts with ULK1, BECN1 and with ATG8 family members, including GABARAP, GABARAPL1, GABARAPL2 and MAP1LC3C/LC3C. Interacts with TRIM21 and SQSTM1/sequestosome 1. Interacts with IRF3. Interacts (via the SPRY domain) with NMI (via coiled-coil domain); the interaction promotes 'Lys-63'-linked ubiquitination of NMI. Interacts with IFI35 and NMI; the interaction facilitates NMI-IFI35 complex formation. (Microbial infection) Interacts (via B30.2/SPRY domain) with severe fever with thrombocytopenia syndrome virus (SFTSV) NSs; this interaction activates NFE2L2-mediated transcriptional activation of antioxidant genes. In terms of processing, autoubiquitinated; does not lead to its proteasomal degradation. Deubiquitinated by USP4; leading to its stabilization. As to expression, isoform 1 and isoform 2 are expressed in fetal and adult heart and fetal lung.

The protein resides in the cytoplasm. It is found in the cytoplasmic vesicle. It localises to the autophagosome. The protein localises to the nucleus. Its subcellular location is the P-body. The protein resides in the stress granule. The catalysed reaction is S-ubiquitinyl-[E2 ubiquitin-conjugating enzyme]-L-cysteine + [acceptor protein]-L-lysine = [E2 ubiquitin-conjugating enzyme]-L-cysteine + N(6)-ubiquitinyl-[acceptor protein]-L-lysine.. It functions in the pathway protein modification; protein ubiquitination. E3 ubiquitin-protein ligase whose activity is dependent on E2 enzymes, UBE2D1, UBE2D2, UBE2E1 and UBE2E2. Forms a ubiquitin ligase complex in cooperation with the E2 UBE2D2 that is used not only for the ubiquitination of USP4 and IKBKB but also for its self-ubiquitination. Component of cullin-RING-based SCF (SKP1-CUL1-F-box protein) E3 ubiquitin-protein ligase complexes such as SCF(SKP2)-like complexes. A TRIM21-containing SCF(SKP2)-like complex is shown to mediate ubiquitination of CDKN1B ('Thr-187' phosphorylated-form), thereby promoting its degradation by the proteasome. Monoubiquitinates IKBKB that will negatively regulates Tax-induced NF-kappa-B signaling. Negatively regulates IFN-beta production post-pathogen recognition by catalyzing polyubiquitin-mediated degradation of IRF3. Mediates the ubiquitin-mediated proteasomal degradation of IgG1 heavy chain, which is linked to the VCP-mediated ER-associated degradation (ERAD) pathway. Promotes IRF8 ubiquitination, which enhanced the ability of IRF8 to stimulate cytokine genes transcription in macrophages. Plays a role in the regulation of the cell cycle progression. Enhances the decapping activity of DCP2. Exists as a ribonucleoprotein particle present in all mammalian cells studied and composed of a single polypeptide and one of four small RNA molecules. At least two isoforms are present in nucleated and red blood cells, and tissue specific differences in RO/SSA proteins have been identified. The common feature of these proteins is their ability to bind HY RNAs.2. Involved in the regulation of innate immunity and the inflammatory response in response to IFNG/IFN-gamma. Organizes autophagic machinery by serving as a platform for the assembly of ULK1, Beclin 1/BECN1 and ATG8 family members and recognizes specific autophagy targets, thus coordinating target recognition with assembly of the autophagic apparatus and initiation of autophagy. Also regulates autophagy through FIP200/RB1CC1 ubiquitination and subsequent decreased protein stability. Represses the innate antiviral response by facilitating the formation of the NMI-IFI35 complex through 'Lys-63'-linked ubiquitination of NMI. During viral infection, promotes cell pyroptosis by mediating 'Lys-6'-linked ubiquitination of ISG12a/IFI27, facilitating its translocation into the mitochondria and subsequent CASP3 activation. When up-regulated through the IFN/JAK/STAT signaling pathway, promotes 'Lys-27'-linked ubiquitination of MAVS, leading to the recruitment of TBK1 and up-regulation of innate immunity. Mediates 'Lys-63'-linked polyubiquitination of G3BP1 in response to heat shock, leading to stress granule disassembly. The protein is E3 ubiquitin-protein ligase TRIM21 of Homo sapiens (Human).